We begin with the raw amino-acid sequence, 446 residues long: MSMTPREIVHELNRHIIGQDDAKRAVAIALRNRWRRMQLPAELRVEVTPKNILMIGPTGVGKTEIARRLAKLANAPFIKVEATKFTEVGYVGRDVESIIRDLADAAIKMFREQEMIRVRHRAEDAAEERILDALLPQARTGFNSDDAAPAQDSNTRQLFRKRLREGQLDDKEIEIEVAEAAGVDISAPPGMEEMTNQLQSLFANMGKGKRKNRKLKVKEALKLVRDEEASRLVNDEELKAKALEAVEQHGIVFIDEIDKVAKRGNAGGVDVSREGVQRDLLPLIEGCTVNTKLGMVKTDHILFIASGAFHLSKPSDLVPELQGRLPIRVELKALSPQDFERILSEPHASLTEQYRELLKTEGLNIEFLPEGIKRLAEIAWQVNEKTENIGARRLHTLLERLLEEVSFSAGDLASAHSEEPIRIDAAYVNSHLGELAQNEDLSRYIL.

ATP is bound by residues I17, 59-64 (GVGKTE), D255, E320, and R392.

Belongs to the ClpX chaperone family. HslU subfamily. As to quaternary structure, a double ring-shaped homohexamer of HslV is capped on each side by a ring-shaped HslU homohexamer. The assembly of the HslU/HslV complex is dependent on binding of ATP.

It localises to the cytoplasm. In terms of biological role, ATPase subunit of a proteasome-like degradation complex; this subunit has chaperone activity. The binding of ATP and its subsequent hydrolysis by HslU are essential for unfolding of protein substrates subsequently hydrolyzed by HslV. HslU recognizes the N-terminal part of its protein substrates and unfolds these before they are guided to HslV for hydrolysis. This is ATP-dependent protease ATPase subunit HslU from Pseudomonas fluorescens (strain ATCC BAA-477 / NRRL B-23932 / Pf-5).